Consider the following 167-residue polypeptide: Transcriptional regulator MraZ (167 aa).

SpoVT-AbrB domains are found at residues 8 to 51 and 92 to 135; these read ESNH…YGDH and SFPT…NPAT.

Belongs to the MraZ family. As to quaternary structure, forms oligomers.

It localises to the cytoplasm. Its subcellular location is the nucleoid. The chain is Transcriptional regulator MraZ from Ruegeria pomeroyi (strain ATCC 700808 / DSM 15171 / DSS-3) (Silicibacter pomeroyi).